We begin with the raw amino-acid sequence, 345 residues long: S-adenosylmethionine:tRNA ribosyltransferase-isomerase (345 aa).

Belongs to the QueA family. Monomer.

It localises to the cytoplasm. It carries out the reaction 7-aminomethyl-7-carbaguanosine(34) in tRNA + S-adenosyl-L-methionine = epoxyqueuosine(34) in tRNA + adenine + L-methionine + 2 H(+). The protein operates within tRNA modification; tRNA-queuosine biosynthesis. Its function is as follows. Transfers and isomerizes the ribose moiety from AdoMet to the 7-aminomethyl group of 7-deazaguanine (preQ1-tRNA) to give epoxyqueuosine (oQ-tRNA). The protein is S-adenosylmethionine:tRNA ribosyltransferase-isomerase of Shewanella putrefaciens (strain CN-32 / ATCC BAA-453).